The sequence spans 142 residues: Phenylalanine ammonia-lyase (142 aa).

The (E)-cinnamate site is built by K66, E94, and N97.

Belongs to the PAL/histidase family. As to quaternary structure, homotetramer. Post-translationally, contains an active site 4-methylidene-imidazol-5-one (MIO), which is formed autocatalytically by cyclization and dehydration of residues Ala-Ser-Gly.

Its subcellular location is the cytoplasm. It catalyses the reaction L-phenylalanine = (E)-cinnamate + NH4(+). It functions in the pathway phenylpropanoid metabolism; trans-cinnamate biosynthesis; trans-cinnamate from L-phenylalanine: step 1/1. Its function is as follows. Catalyzes the non-oxidative deamination of L-phenylalanine to form trans-cinnamic acid and a free ammonium ion. Facilitates the commitment step in phenylpropanoid pathways that produce secondary metabolites such as lignins, coumarins and flavonoids. The polypeptide is Phenylalanine ammonia-lyase (palA) (Agaricus bisporus (White button mushroom)).